An 871-amino-acid chain; its full sequence is Alanine--tRNA ligase (871 aa).

Zn(2+)-binding residues include histidine 561, histidine 565, cysteine 662, and histidine 666.

Belongs to the class-II aminoacyl-tRNA synthetase family. It depends on Zn(2+) as a cofactor.

Its subcellular location is the cytoplasm. It catalyses the reaction tRNA(Ala) + L-alanine + ATP = L-alanyl-tRNA(Ala) + AMP + diphosphate. Functionally, catalyzes the attachment of alanine to tRNA(Ala) in a two-step reaction: alanine is first activated by ATP to form Ala-AMP and then transferred to the acceptor end of tRNA(Ala). Also edits incorrectly charged Ser-tRNA(Ala) and Gly-tRNA(Ala) via its editing domain. This chain is Alanine--tRNA ligase, found in Dechloromonas aromatica (strain RCB).